We begin with the raw amino-acid sequence, 202 residues long: Ribonuclease HII (202 aa).

The region spanning 14–202 (LPLAGVDEAG…VAQFSLFPAA (189 aa)) is the RNase H type-2 domain. Residues aspartate 20, glutamate 21, and aspartate 111 each coordinate a divalent metal cation.

The protein belongs to the RNase HII family. The cofactor is Mn(2+). Mg(2+) is required as a cofactor.

It is found in the cytoplasm. It catalyses the reaction Endonucleolytic cleavage to 5'-phosphomonoester.. Functionally, endonuclease that specifically degrades the RNA of RNA-DNA hybrids. In Rhizorhabdus wittichii (strain DSM 6014 / CCUG 31198 / JCM 15750 / NBRC 105917 / EY 4224 / RW1) (Sphingomonas wittichii), this protein is Ribonuclease HII.